Here is a 563-residue protein sequence, read N- to C-terminus: Putative ABC transporter ATP-binding protein SCO2324 (563 aa).

An ABC transporter 1 domain is found at 2–243 (IRFEDVSVTY…SPVYPPVVGL (242 aa)). 36–43 (GPSGVGKS) serves as a coordination point for ATP. The interval 271–317 (AGREIPDHTPPPSAPLPAPPAPRPVTSRWRRRGKRPENPSAPTPYAA) is disordered. The segment covering 278–293 (HTPPPSAPLPAPPAPR) has biased composition (pro residues). One can recognise an ABC transporter 2 domain in the interval 317-545 (AEVRSLAVRR…SPSYAPQVAK (229 aa)). 349–356 (GRNGAGKS) provides a ligand contact to ATP.

Belongs to the ABC transporter superfamily.

It is found in the cell membrane. In terms of biological role, probably part of an ABC transporter complex. Responsible for energy coupling to the transport system. The protein is Putative ABC transporter ATP-binding protein SCO2324 of Streptomyces coelicolor (strain ATCC BAA-471 / A3(2) / M145).